The following is a 249-amino-acid chain: Sulfate transporter CysZ (249 aa).

The next 4 helical transmembrane spans lie at 26–46, 71–91, 150–170, and 206–226; these read LFVL…IYFA, VIWP…FTML, LFIL…WLLF, and LGFG…ILMM.

It belongs to the CysZ family.

It is found in the cell inner membrane. Its function is as follows. High affinity, high specificity proton-dependent sulfate transporter, which mediates sulfate uptake. Provides the sulfur source for the cysteine synthesis pathway. The protein is Sulfate transporter CysZ of Pseudomonas fluorescens (strain ATCC BAA-477 / NRRL B-23932 / Pf-5).